The following is a 252-amino-acid chain: Large ribosomal subunit protein uL4 (252 aa).

The protein belongs to the universal ribosomal protein uL4 family. Part of the 50S ribosomal subunit.

In terms of biological role, one of the primary rRNA binding proteins, this protein initially binds near the 5'-end of the 23S rRNA. It is important during the early stages of 50S assembly. It makes multiple contacts with different domains of the 23S rRNA in the assembled 50S subunit and ribosome. Functionally, forms part of the polypeptide exit tunnel. This chain is Large ribosomal subunit protein uL4, found in Methanococcus maripaludis (strain DSM 14266 / JCM 13030 / NBRC 101832 / S2 / LL).